Reading from the N-terminus, the 556-residue chain is Interleukin-1 receptor-like 1 (556 aa).

The signal sequence occupies residues 1 to 18; sequence MGFWILAILTILMYSTAA. 2 consecutive Ig-like C2-type domains span residues 19-103 and 114-197; these read KFSK…ANVT and PDYL…VTAT. At 19-328 the chain is on the extracellular side; the sequence is KFSKQSWGLE…SRKNPIDHHS (310 aa). Cysteines 36 and 87 form a disulfide. N-linked (GlcNAc...) asparagine glycans are attached at residues asparagine 54, asparagine 95, asparagine 101, asparagine 140, and asparagine 191. Cystine bridges form between cysteine 111–cysteine 151 and cysteine 133–cysteine 181. A flexible linker region spans residues 198–211; the sequence is RSFTVKDEQGFSLF. The Ig-like C2-type 3 domain occupies 212–319; that stretch reads PVIGAPAQNE…GLRRHTVRLS (108 aa). Asparagine 232, asparagine 254, and asparagine 273 each carry an N-linked (GlcNAc...) asparagine glycan. 2 disulfide bridges follow: cysteine 235/cysteine 303 and cysteine 238/cysteine 282. A Glycyl lysine isopeptide (Lys-Gly) (interchain with G-Cter in ubiquitin) cross-link involves residue lysine 321. Residues 329–349 form a helical membrane-spanning segment; the sequence is IYCIIAVCSVFLMLINVLVII. Residues 350 to 556 lie on the Cytoplasmic side of the membrane; it reads LKMFWIEATL…SLTPLAAQKQ (207 aa). Residues 375–535 enclose the TIR domain; that stretch reads KLYDAYVVYP…KFWKHVRYQM (161 aa). Glutamate 461 is an active-site residue.

It belongs to the interleukin-1 receptor family. In terms of assembly, interacts with MYD88, IRAK1, IRAK4, and TRAF6. Bound to its ligand IL-33, interacts with IL1RAP to form the minimal interleukin-33 signaling complex with a 1:1:1 stoichiometry. Interacts with KIT (bound to KITLG/SCF). A mast cell-specific KITLG/SCF-induced interleukin-33 signaling complex contains IL1RL1, IL1RAP, KIT and MYD88. Interacts with TMED1. Ubiquitinated at Lys-321 in a FBXL19-mediated manner; leading to proteasomal degradation. Ubiquitination by TRAF6 via 'Lys-27'-linked polyubiquitination and deubiquitination by USP38 serves as a critical regulatory mechanism for fine-tuning IL1RL1-mediated inflammatory response. In terms of tissue distribution, highly expressed in kidney, lung, placenta, stomach, skeletal muscle, colon and small intestine. Isoform A is prevalently expressed in the lung, testis, placenta, stomach and colon. Isoform B is more abundant in the brain, kidney and the liver. Isoform C is not detected in brain, heart, liver, kidney and skeletal muscle. Expressed on T-cells in fibrotic liver; at protein level. Overexpressed in fibrotic and cirrhotic liver.

The protein localises to the cell membrane. It localises to the secreted. The catalysed reaction is NAD(+) + H2O = ADP-D-ribose + nicotinamide + H(+). In terms of biological role, receptor for interleukin-33 (IL-33) which plays crucial roles in innate and adaptive immunity, contributing to tissue homeostasis and responses to environmental stresses together with coreceptor IL1RAP. Its stimulation recruits MYD88, IRAK1, IRAK4, and TRAF6, followed by phosphorylation of MAPK3/ERK1 and/or MAPK1/ERK2, MAPK14, and MAPK8. Possibly involved in helper T-cell function. Upon tissue injury, induces UCP2-dependent mitochondrial rewiring that attenuates the generation of reactive oxygen species and preserves the integrity of Krebs cycle required for persistent production of itaconate and subsequent GATA3-dependent differentiation of inflammation-resolving alternatively activated macrophages. Its function is as follows. Inhibits IL-33 signaling. The sequence is that of Interleukin-1 receptor-like 1 (IL1RL1) from Homo sapiens (Human).